The following is a 1197-amino-acid chain: Transient receptor potential cation channel subfamily A member 1 (1197 aa).

Residues 1–753 lie on the Cytoplasmic side of the membrane; sequence MTSGDKETPK…KWNSYGKYFH (753 aa). ANK repeat units lie at residues 89–118, 122–151, 155–184, 190–219, 224–253, 265–294, 298–327, 336–365, 369–398, 443–472, 476–505, 512–541, 544–574, and 578–607; these read KGRT…DFNA, AGNT…DTGV, KKQA…VIDI, HGRT…ACPR, NGYY…QRGC, EGNV…KIST, DLST…MEKR, QKMT…DINA, EHRS…CISV, MGCS…CINL, NNES…GSFI, AGMT…LLHR, TGRN…LLDQ, and DGNT…KLVY. Residues 754-774 traverse the membrane as a helical segment; that stretch reads LANLLIYSIFLVFVTIYSSLM. At 775 to 827 the chain is on the extracellular side; sequence MNNIELKAGDNKTMSQYCNMGWEQLTMNLSQNPSVASQIRLDSCEERINRTTA. N785, N802, and N823 each carry an N-linked (GlcNAc...) asparagine glycan. The helical transmembrane segment at 828-848 threads the bilayer; that stretch reads ILFCAVVIVVYILLNSMRELI. Residues 849–856 lie on the Cytoplasmic side of the membrane; the sequence is QIYQQKLH. A helical transmembrane segment spans residues 857–877; the sequence is YILETVNLISWVLYISALVMV. At 878–889 the chain is on the extracellular side; it reads TPAFQPDGGINT. Residues 890-910 traverse the membrane as a helical segment; the sequence is IHYSAASIAVFLSWFRLLLFL. The Cytoplasmic segment spans residues 911 to 932; it reads QRFDQVGIYVVMFLEILQTLIK. The chain crosses the membrane as a helical span at residues 933–953; that stretch reads VLMVFSILIIAFGLAFYILLS. The Extracellular segment spans residues 954–968; sequence KIIDPQPNHLSFSNI. An intramembrane region (pore-forming) is located at residues 969–989; it reads PMSLLRTFSMMLGELDFVGTY. Over 990–1004 the chain is Extracellular; the sequence is VNTYYRDQLKVPMTS. The helical transmembrane segment at 1005–1025 threads the bilayer; the sequence is FLILSVFMILMPILLMNLLIG. Residues 1026–1197 are Cytoplasmic-facing; the sequence is LAVGDIESVR…RAALSFNKSM (172 aa).

The protein belongs to the transient receptor (TC 1.A.4) family. Homotetramer.

It is found in the cell membrane. Its function is as follows. Essential for thermotaxis by sensing environmental temperature. Receptor-activated non-selective cation channel involved in detection of sensations such as temperature. Involved in heat nociception by being activated by warm temperature of about 24-29 degrees Celsius. This Drosophila melanogaster (Fruit fly) protein is Transient receptor potential cation channel subfamily A member 1 (TrpA1).